The following is a 264-amino-acid chain: ELL-associated factor 2 (264 aa).

Disordered regions lie at residues 114–154 (EGSS…PSSP) and 169–264 (MDQL…DSDD). The span at 117 to 142 (SKVQSRIEQQQQQIRNSSKTPNNIKN) shows a compositional bias: polar residues. The segment covering 173–196 (SSSDSSSDSKSSSSSSSSSENSSS) has biased composition (low complexity). Basic and acidic residues predominate over residues 228–238 (VPDKDASHNRS). The segment covering 239 to 264 (QENSGHMMNTLRSDLQLSESGSDSDD) has biased composition (polar residues).

It belongs to the EAF family.

It localises to the nucleus speckle. Functionally, may act as a transcriptional transactivator. The sequence is that of ELL-associated factor 2 (EAF2) from Gallus gallus (Chicken).